Reading from the N-terminus, the 341-residue chain is Eukaryotic translation initiation factor 2 subunit 1 (341 aa).

An S1 motif domain is found at 16–87; the sequence is EDVVMVNVLS…EKGYIDLSKR (72 aa). Serine 51 carries the post-translational modification Phosphoserine. The disordered stretch occupies residues 293-341; sequence AENAQVAGDDDEEDGADQEGMQFDPEKEFNHKGSGAGRANEEDEEEEED. Acidic residues predominate over residues 300-309; sequence GDDDEEDGAD.

It belongs to the eIF-2-alpha family. As to quaternary structure, eukaryotic translation initiation factor 2 eIF2 is a heterotrimeric complex composed of an alpha, a beta and a gamma subunit. Post-translationally, phosphorylation of eIF-2-alpha impairs the recycling of eIF-2 between successive rounds of initiation and thus leads to inhibition of translation.

The protein localises to the cytoplasm. It localises to the cytosol. Its function is as follows. eIF-2 functions in the early steps of protein synthesis by forming a ternary complex with GTP and initiator tRNA. This pre-initiation complex mediates ribosomal recognition of a start codon during the scanning process of the leader region. The chain is Eukaryotic translation initiation factor 2 subunit 1 from Drosophila melanogaster (Fruit fly).